The following is a 269-amino-acid chain: MGQNDIMSTAEDFADQFLRVTKQYLPHVARLCLISTFLEDGIRMWFQWSEQRDYIDGTWNCGYFLASIFVFINLFGQLSGCILVLSRNFVQYACFGLFGIIALQTIAYSILWDLKFLMRNLALGGGLLLLLAESRSEGKSMFAGVPTMRESSPKQYMQLGGRVLLVLMFMTLLHFDMNFFYILQNIVGTALIILVAIGFKTKLAALTLVIWLFGINIYFNAFWTIPAYKPMHDFLKYDFFQTMSVIGGLLLVVALGPGGVSMDEKKKEW.

6 helical membrane passes run 64 to 84, 92 to 112, 157 to 177, 179 to 199, 203 to 223, and 242 to 262; these read FLAS…CILV, YACF…SILW, MQLG…HFDM, FFYI…AIGF, LAAL…NAFW, and TMSV…GVSM. The Di-lysine motif signature appears at 266–269; the sequence is KKEW.

It belongs to the SURF4 family.

Its subcellular location is the endoplasmic reticulum membrane. The protein localises to the endoplasmic reticulum-Golgi intermediate compartment membrane. The protein resides in the golgi apparatus membrane. In terms of biological role, endoplasmic reticulum cargo receptor that mediates the export of lipoproteins by recruiting cargos into COPII vesicles to facilitate their secretion. Acts as a cargo receptor for lipoproteins bearing both APOB and APOA1, thereby regulating lipoprotein delivery and the maintenance of lipid homeostasis. In Gallus gallus (Chicken), this protein is Surfeit locus protein 4.